Consider the following 299-residue polypeptide: Prohibitin-2 (299 aa).

Ala2 bears the N-acetylalanine mark. The segment at 19–49 (MGTALKLLLGAGAVAYGVRESVFTVEGGHRA) is necessary for transcriptional repression. A Phosphotyrosine modification is found at Tyr128. Residue Lys147 is modified to N6-acetyllysine. The segment at 150 to 174 (ASQLITQRAQVSLLIRRELTERAKD) is necessary for transcriptional repression. The residue at position 151 (Ser151) is a Phosphoserine. The stretch at 190–238 (SREYTAAVEAKQVAQQEAQRAQFLVEKAKQEQRQKIVQAEGEAEAAKML) forms a coiled coil. Residues Lys200, Lys236, Lys250, and Lys262 each carry the N6-acetyllysine modification.

It belongs to the prohibitin family. The mitochondrial prohibitin complex consists of two subunits (PHB1 and PHB2), assembled into a membrane-associated ring-shaped supercomplex of approximately 1 mDa. Interacts with ESR1, HDAC1 and HDAC5. Interacts with ZNF703. Interacts with STOML2. Interacts with ARFGEF3. Interacts with SPHK2. Interacts with COX4I1; the interaction associates PHB2 with COX. Interacts with MAP1LC3B (membrane-bound form LC3-II); the interaction is direct and upon mitochondrial depolarization and proteasome-dependent outer membrane rupture. Interacts with IGFBP6 (via C-terminal domain). Interacts with CLPB. Interacts with CD86 (via cytoplasmic domain); the interactions increases after priming with CD40. Interacts with AFG3L2. Interacts with DNAJC19. Interacts with AKT2; this interaction may be important for myogenic differentiation. Phosphorylated. Tyrosine phosphorylation is indirectly stimulated by IGFBP6.

Its subcellular location is the mitochondrion inner membrane. It is found in the cytoplasm. The protein localises to the nucleus. The protein resides in the cell membrane. Its function is as follows. Protein with pleiotropic attributes mediated in a cell-compartment- and tissue-specific manner, which include the plasma membrane-associated cell signaling functions, mitochondrial chaperone, and transcriptional co-regulator of transcription factors and sex steroid hormones in the nucleus. In the mitochondria, together with PHB, forms large ring complexes (prohibitin complexes) in the inner mitochondrial membrane (IMM) and functions as a chaperone protein that stabilizes mitochondrial respiratory enzymes and maintains mitochondrial integrity in the IMM, which is required for mitochondrial morphogenesis, neuronal survival, and normal lifespan. The prohibitin complex, with DNAJC19, regulates cardiolipin remodeling and the protein turnover of OMA1 in a cardiolipin-binding manner. Also regulates cytochrome-c oxidase assembly (COX) and mitochondrial respiration. Binding to sphingoid 1-phosphate (SPP) modulates its regulator activity. Has a key role of mitophagy receptor involved in targeting mitochondria for autophagic degradation. Involved in mitochondrial-mediated antiviral innate immunity, activates RIG-I-mediated signal transduction and production of IFNB1 and pro-inflammatory cytokine IL6. In terms of biological role, in the nucleus, serves as transcriptional co-regulator. Acts as a mediator of transcriptional repression by nuclear hormone receptors via recruitment of histone deacetylases. Functions as an estrogen receptor (ER)-selective coregulator that potentiates the inhibitory activities of antiestrogens and represses the activity of estrogens. Competes with NCOA1 for modulation of ER transcriptional activity. Functionally, in the plasma membrane, is involved in IGFBP6-induced cell migration. Cooperates with CD86 to mediate CD86-signaling in B lymphocytes that regulates the level of IgG1 produced through the activation of distal signaling intermediates. Upon CD40 engagement, required to activate NF-kappa-B signaling pathway via phospholipase C and protein kinase C activation. The sequence is that of Prohibitin-2 from Rattus norvegicus (Rat).